We begin with the raw amino-acid sequence, 349 residues long: Pinopsin (349 aa).

Polar residues predominate over residues 1-16 (MDPTNSPQEPPHTSTP). Positions 1–22 (MDPTNSPQEPPHTSTPGPFDGP) are disordered. The Extracellular segment spans residues 1-32 (MDPTNSPQEPPHTSTPGPFDGPQWPHQAPRGM). A helical membrane pass occupies residues 33–57 (YLSVAVLMGIVVISASVVNGLVIVV). Residues 58–69 (SIRYKKLRSPLN) lie on the Cytoplasmic side of the membrane. A helical membrane pass occupies residues 70–94 (YILVNLAMADLLVTLCGSSVSFSNN). Topologically, residues 95–109 (INGFFVFGKRLCELE) are extracellular. A disulfide bridge connects residues Cys-106 and Cys-183. The helical transmembrane segment at 110-129 (GFMVSLTGIVGLWSLAILAL) threads the bilayer. The Cytoplasmic segment spans residues 130–148 (ERYVVVCRPLGDFRFQHRH). Residues 149 to 172 (AVTGCAFTWVWSLLWTTPPLLGWS) traverse the membrane as a helical segment. The Extracellular segment spans residues 173–196 (SYVPEGLRTSCGPNWYTGGSNNNS). Asn-194 carries an N-linked (GlcNAc...) asparagine glycan. A helical transmembrane segment spans residues 197–224 (YILTLFVTCFVMPLSLILFSYANLLMTL). At 225 to 246 (RAAAAQQQESDTTQQAERQVTR) the chain is on the cytoplasmic side. The helical transmembrane segment at 247–270 (MVVAMVMAFLICWLPYTTFALVVA) threads the bilayer. Over 271–278 (TNKDIAIQ) the chain is Extracellular. A helical membrane pass occupies residues 279-303 (PALASLPSYFSKTATVYNPIIYVFM). Lys-290 carries the N6-(retinylidene)lysine modification. Topologically, residues 304-349 (NKQFQSCLLKMLCCGHHPRGTGRTAPAAPASPTDGLRNKVTPSHPV) are cytoplasmic. 2 S-palmitoyl cysteine lipidation sites follow: Cys-316 and Cys-317. The interval 325-349 (GRTAPAAPASPTDGLRNKVTPSHPV) is disordered.

It belongs to the G-protein coupled receptor 1 family. Opsin subfamily. Phosphorylated on some or all of the serine and threonine residues present in the C-terminal region. As to expression, pineal gland.

Its subcellular location is the membrane. Produces a slow and prolonged phototransduction response consistent with the non-visual function of pineal photoreception. The sequence is that of Pinopsin from Columba livia (Rock dove).